The sequence spans 583 residues: 15-cis-phytoene desaturase, chloroplastic/chromoplastic (583 aa).

A chloroplast and chromoplast-targeting transit peptide spans 1–111 (MPQIGLVSAV…FRASPRPTKP (111 aa)). FAD is bound by residues 118–134 (GAGL…ADAG), 141–142 (EA), lysine 149, 166–167 (HI), and tyrosine 172. Arginine 307 serves as a coordination point for substrate. Isoleucine 349 and aspartate 538 together coordinate FAD. A substrate-binding site is contributed by alanine 546. Residue methionine 548 participates in FAD binding.

The protein belongs to the carotenoid/retinoid oxidoreductase family. In terms of assembly, homotetramer. It depends on FAD as a cofactor.

It is found in the plastid. It localises to the chloroplast. The protein resides in the chromoplast. The protein localises to the membrane. It catalyses the reaction 2 a plastoquinone + 15-cis-phytoene = 9,9',15-tri-cis-zeta-carotene + 2 a plastoquinol. It participates in carotenoid biosynthesis; lycopene biosynthesis. Functionally, converts phytoene into zeta-carotene via the intermediary of phytofluene by the symmetrical introduction of two double bonds at the C-11 and C-11' positions of phytoene with a concomitant isomerization of two neighboring double bonds at the C9 and C9' positions from trans to cis. The protein is 15-cis-phytoene desaturase, chloroplastic/chromoplastic (PDS) of Solanum lycopersicum (Tomato).